A 171-amino-acid polypeptide reads, in one-letter code: Translation initiation factor IF-3 (171 aa).

Belongs to the IF-3 family. In terms of assembly, monomer.

The protein localises to the cytoplasm. IF-3 binds to the 30S ribosomal subunit and shifts the equilibrium between 70S ribosomes and their 50S and 30S subunits in favor of the free subunits, thus enhancing the availability of 30S subunits on which protein synthesis initiation begins. In Halalkalibacterium halodurans (strain ATCC BAA-125 / DSM 18197 / FERM 7344 / JCM 9153 / C-125) (Bacillus halodurans), this protein is Translation initiation factor IF-3.